Reading from the N-terminus, the 239-residue chain is SKA complex subunit 1 (239 aa).

The disordered stretch occupies residues P87–G115. The segment at N116–A239 is microtubule binding.

This sequence belongs to the SKA1 family. As to quaternary structure, component of the SKA complex, composed of two copies of ska-1 and a single copy of ska-3. The core complex associates with microtubules and may form dimeric assemblies. Interacts with ska-3 and microtubules.

It localises to the cytoplasm. Its subcellular location is the cytoskeleton. The protein localises to the spindle. The protein resides in the chromosome. It is found in the centromere. It localises to the kinetochore. In terms of biological role, component of the SKA complex, a microtubule plus end-binding complex of the outer kinetochore that stabilizes spindle microtubule-kinetochore attachments, promotes alignment of chromosomes at the mitotic spindle equator (chromosome congression) and assists suppression of the spindle assembly checkpoint. Kinetochores, consisting of a centromere-associated inner segment and a microtubule-contacting outer segment, play a crucial role in chromosome segregation by mediating the physical connection between centromeric DNA and spindle microtubules. The outer kinetochore is made up of the ten-subunit KMN network complex, comprising the MIS12, NDC80 and KNL1 complexes, and auxiliary microtubule-associated components such as the SKA complex; together they connect the outer kinetochore with the inner kinetochore, bind microtubules, and mediate interactions with mitotic checkpoint proteins that delay anaphase until chromosomes are bioriented on the spindle. The SKA complex is loaded onto bioriented kinetochores and it facilitates chromosome congression by stabilizing microtubules and end-on attachment of the NDC80 complex to depolymerizing spindle microtubules, thereby assisting the poleward-moving kinetochore in withstanding microtubule pulling forces. The complex associates with dynamic microtubule plus-ends and can track both depolymerizing and elongating microtubules. The complex recruits protein phosphatase 1 (PP1) to the kinetochore in prometaphase and metaphase, to oppose spindle assembly checkpoint signaling and promote the onset of anaphase. In the complex, it mediates interactions with microtubules. During meiosis the SKA complex stabilizes the meiotic spindle and is required for its migration to the cortex. This chain is SKA complex subunit 1, found in Caenorhabditis briggsae.